A 394-amino-acid chain; its full sequence is Envelope glycoprotein D (394 aa).

Positions 1–25 are cleaved as a signal peptide; sequence MGGAAARLGAVILFVVIVGLHGVRS. The tract at residues 26–57 is interaction with TNFRSF14; it reads KYALVDASLKMADPNRFRGKDLPVLDQLTDPP. At 26-340 the chain is on the virion surface side; sequence KYALVDASLK…YHPPATPNNM (315 aa). His-64 contributes to the Zn(2+) binding site. Intrachain disulfides connect Cys-91–Cys-214, Cys-131–Cys-227, and Cys-143–Cys-152. N-linked (GlcNAc...) asparagine; by host glycosylation is found at Asn-119 and Asn-146. Asp-240 contributes to the Zn(2+) binding site. Positions 261-305 are profusion; it reads LKIAGWHGPKAPYTSTLLPPELSETPNATQPELAPEDPEDSALLE. The interval 275–301 is disordered; the sequence is STLLPPELSETPNATQPELAPEDPEDS. Asn-287 is a glycosylation site (N-linked (GlcNAc...) asparagine; by host). A helical membrane pass occupies residues 341–361; the sequence is GLIAGAVGGSLLAALVICGIV. The Intravirion segment spans residues 362 to 394; that stretch reads YWMRRHTQKAPKRIRLPHIREDDQPSSHQPLFY. The disordered stretch occupies residues 375–394; that stretch reads IRLPHIREDDQPSSHQPLFY.

This sequence belongs to the herpesviridae glycoprotein D family. In terms of assembly, homodimer. Interacts with host receptor TNFRSF14. Interacts with host receptor NECTIN1. Interacts (via profusion domain) with gB; this interaction occurs in the absence of gH/gL. Interacts (via profusion domain) with gH/gL heterodimer; this interaction occurs in the absence of gB. Associates with the gB-gH/gL-gD complex. Interacts (via C-terminus) with UL11 tegument protein. Interacts (via C-terminus) with VP22 tegument protein; this interaction has been demonstrated in other strains, but might be very weak since PubMed:19279114 has failed to see it. Interacts with host RSAD2.

The protein localises to the virion membrane. It localises to the host Golgi apparatus. Envelope glycoprotein that binds to the host cell entry receptors NECTIN1, TNFRSF14/HVEM and 3-O-sulfated heparan sulfate, promoting the virus entry into host cells. May trigger fusion with host membrane, by recruiting the fusion machinery composed of gB and gH/gL. The protein is Envelope glycoprotein D (gD) of Homo sapiens (Human).